Consider the following 155-residue polypeptide: Interleukin-2 (155 aa).

Positions 1-20 are cleaved as a signal peptide; that stretch reads MYKIQLLSCIALTLALVANG. O-linked (GalNAc...) threonine glycosylation occurs at T23. Residues C79 and C127 are joined by a disulfide bond.

This sequence belongs to the IL-2 family.

It is found in the secreted. In terms of biological role, cytokine produced by activated CD4-positive helper T-cells and to a lesser extend activated CD8-positive T-cells and natural killer (NK) cells that plays pivotal roles in the immune response and tolerance. Binds to a receptor complex composed of either the high-affinity trimeric IL-2R (IL2RA/CD25, IL2RB/CD122 and IL2RG/CD132) or the low-affinity dimeric IL-2R (IL2RB and IL2RG). Interaction with the receptor leads to oligomerization and conformation changes in the IL-2R subunits resulting in downstream signaling starting with phosphorylation of JAK1 and JAK3. In turn, JAK1 and JAK3 phosphorylate the receptor to form a docking site leading to the phosphorylation of several substrates including STAT5. This process leads to activation of several pathways including STAT, phosphoinositide-3-kinase/PI3K and mitogen-activated protein kinase/MAPK pathways. Functions as a T-cell growth factor and can increase NK-cell cytolytic activity as well. Promotes strong proliferation of activated B-cells and subsequently immunoglobulin production. Plays a pivotal role in regulating the adaptive immune system by controlling the survival and proliferation of regulatory T-cells, which are required for the maintenance of immune tolerance. Moreover, participates in the differentiation and homeostasis of effector T-cell subsets, including Th1, Th2, Th17 as well as memory CD8-positive T-cells. This is Interleukin-2 (IL2) from Boselaphus tragocamelus (Nilgai).